Consider the following 530-residue polypeptide: MDSQSVAPVVLVILDGWGYRDALDGNAVLAAETPVLDSLWAAYPHTLLQASGRAVGLPAGQMGNSEVGHLTLGAGRVVPQELVRISDAIETGSLFQDPLLMQVCRQLRERGGRFHFVGLCSEGGVHSHIDHLYGLLKLAAQAEIPAYVHAITDGRDTLPRDGARVLAALEKELQWLGNGVIATLSGRYYAMDRDRRWERTQKAYEIMTQDGPGRGQSAAEVMEAFYAQDLTDEFIPPTRLAPGAVQPGDAVLFFNFRPDRARQLTQAFVCPDFSGFQRPLLPALTFITMTQYEADLPVQVLFKPQNLNHLLGQVVSEAGLKQLRIAETEKYAHVTYFFNGGIEQPFPGEDRILVQSPLVTTYDQAPEMSAVEVTDKAIEAIARREYSLVVLNYANPDMVGHTGNYEATIRALETVDRCLGRLLAAVVDAGGTTLILADHGNAELMWDENGNPWTAHTTNPVPCILVEGERRKIPGCGGDVKLRSNGTLADVAPTLLEILGLPQPPEMTGRSLLQPAEYTILQRQPSPVGR.

2 residues coordinate Mn(2+): Asp15 and Ser65. Ser65 (phosphoserine intermediate) is an active-site residue. Residues His126, 155–156 (RD), Arg187, Arg193, 257–260 (RPDR), and Lys330 each bind substrate. Positions 397, 401, 438, 439, and 456 each coordinate Mn(2+).

Belongs to the BPG-independent phosphoglycerate mutase family. In terms of assembly, monomer. Mn(2+) is required as a cofactor.

The catalysed reaction is (2R)-2-phosphoglycerate = (2R)-3-phosphoglycerate. It participates in carbohydrate degradation; glycolysis; pyruvate from D-glyceraldehyde 3-phosphate: step 3/5. Its function is as follows. Catalyzes the interconversion of 2-phosphoglycerate and 3-phosphoglycerate. This is 2,3-bisphosphoglycerate-independent phosphoglycerate mutase from Synechococcus sp. (strain JA-2-3B'a(2-13)) (Cyanobacteria bacterium Yellowstone B-Prime).